A 498-amino-acid chain; its full sequence is Probable deoxyguanosinetriphosphate triphosphohydrolase (498 aa).

One can recognise an HD domain in the interval 71–262; the sequence is RLTHSLEVQQ…MEAADDISYC (192 aa).

The protein belongs to the dGTPase family. Type 1 subfamily. Mg(2+) serves as cofactor.

It carries out the reaction dGTP + H2O = 2'-deoxyguanosine + triphosphate + H(+). Functionally, dGTPase preferentially hydrolyzes dGTP over the other canonical NTPs. The polypeptide is Probable deoxyguanosinetriphosphate triphosphohydrolase (Pseudomonas aeruginosa (strain ATCC 15692 / DSM 22644 / CIP 104116 / JCM 14847 / LMG 12228 / 1C / PRS 101 / PAO1)).